Consider the following 183-residue polypeptide: Microfibrillar-associated protein 2 (183 aa).

The signal sequence occupies residues 1 to 17 (MRAASLFLLFLPAGLLA). Gln18 is modified (pyrrolidone carboxylic acid). Gln20 is covalently cross-linked (Isoglutamyl lysine isopeptide (Gln-Lys) (interchain with K-?)). A sulfotyrosine mark is found at Tyr47, Tyr48, and Tyr50. The region spanning 153–183 (CRDKFSKCGVLASSGLCQSVAAACARSCGGC) is the ShKT domain. Cystine bridges form between Cys153/Cys183, Cys160/Cys176, and Cys169/Cys180.

It belongs to the MFAP family. In terms of assembly, forms a ternary complex with BGN and ELN. Interacts with FBN1 (via N-terminal domain) and FBN2. In terms of processing, O-glycosylated; glycans consist of Gal(beta1-3)GalNAc. Post-translationally, forms intermolecular disulfide bonds either with other MAGP-1 molecules or with other components of the microfibrils. Forms transglutaminase cross-links with tropoelastin.

The protein localises to the secreted. Its subcellular location is the extracellular space. The protein resides in the extracellular matrix. Functionally, component of the elastin-associated microfibrils. This chain is Microfibrillar-associated protein 2 (MFAP2), found in Bos taurus (Bovine).